The following is a 448-amino-acid chain: tRNA(Ile)-lysidine synthase (448 aa).

29-34 (SGGVDS) contributes to the ATP binding site.

Belongs to the tRNA(Ile)-lysidine synthase family.

Its subcellular location is the cytoplasm. The enzyme catalyses cytidine(34) in tRNA(Ile2) + L-lysine + ATP = lysidine(34) in tRNA(Ile2) + AMP + diphosphate + H(+). Functionally, ligates lysine onto the cytidine present at position 34 of the AUA codon-specific tRNA(Ile) that contains the anticodon CAU, in an ATP-dependent manner. Cytidine is converted to lysidine, thus changing the amino acid specificity of the tRNA from methionine to isoleucine. This Azoarcus sp. (strain BH72) protein is tRNA(Ile)-lysidine synthase.